Here is a 637-residue protein sequence, read N- to C-terminus: Galactofuranosyltransferase GlfT2 (637 aa).

Residues Arg171, Gln200, Asn229, and Asp256 each contribute to the UDP-alpha-D-galactofuranose site. Asp256 and Asp258 together coordinate Mn(2+). Residue Asp372 is the Proton acceptor of the active site. Residue His396 participates in Mn(2+) binding.

Belongs to the glycosyltransferase 2 family. As to quaternary structure, homotetramer. Requires Mn(2+) as cofactor. It depends on Mg(2+) as a cofactor.

It is found in the cell membrane. The catalysed reaction is beta-D-galactofuranosyl-(1-&gt;5)-beta-D-galactofuranosyl-(1-&gt;4)-alpha-L-rhamnosyl-(1-&gt;3)-N-acetyl-alpha-D-glucosaminyl-diphospho-trans,octa-cis-decaprenol + 28 UDP-alpha-D-galactofuranose = [beta-D-galactofuranosyl-(1-&gt;5)-beta-D-galactofuranosyl-(1-&gt;6)]14-beta-D-galactofuranosyl-(1-&gt;5)-beta-D-galactofuranosyl-(1-&gt;4)-alpha-L-rhamnopyranosyl-(1-&gt;3)-N-acetyl-alpha-D-glucosaminyl-diphospho-trans,octa-cis-decaprenol + 28 UDP + 28 H(+). It participates in cell wall biogenesis; cell wall polysaccharide biosynthesis. Its function is as follows. Involved in the galactan polymerization of the arabinogalactan (AG) region of the mycolylarabinogalactan-peptidoglycan (mAGP) complex, an essential component of the mycobacteria cell wall. Thus, successively transfers approximately 28 galactofuranosyl (Galf) residues from UDP-galactofuranose (UDP-Galf) onto the galactofuranosyl-galactofuranosyl-rhamnosyl-GlcNAc-diphospho-decaprenol (Galf-Galf-Rha-GlcNAc-PP-C50) acceptor produced by GlfT1, with alternating 1-&gt;5 and 1-&gt;6 links, forming a galactan domain with approximately 30 galactofuranosyl residues. The chain is Galactofuranosyltransferase GlfT2 from Mycobacterium tuberculosis (strain ATCC 25618 / H37Rv).